The chain runs to 480 residues: Aromatic-L-amino-acid decarboxylase (480 aa).

Residue Lys292 is modified to N6-(pyridoxal phosphate)lysine.

Belongs to the group II decarboxylase family. Pyridoxal 5'-phosphate is required as a cofactor.

It carries out the reaction L-tryptophan + H(+) = tryptamine + CO2. The catalysed reaction is L-phenylalanine + H(+) = 2-phenylethylamine + CO2. The enzyme catalyses 5-hydroxy-L-tryptophan + H(+) = serotonin + CO2. It catalyses the reaction L-dopa + H(+) = dopamine + CO2. Its function is as follows. Involved in bacillamide C biosynthesis. Catalyzes the decarboxylation of L-tryptophan to tryptamine. The tryptamine obtained is then probably incorporated into the bacillamide C peptide, which is derived from the amino acids alanine, cysteine and tryptophan through nonribosomal peptide synthetase (NRPS) biosynthesis strategy. L-tryptophan is the best substrate, but the enzyme displays broad substrate specificity for various aromatic amino acids in vitro and it can also catalyze the decarboxylation of L-phenylalanine, 5-hydroxy-L-tryptophan (L-HTP) and L-DOPA, with lower efficiency. Exhibits weak activity with L-tyrosine. This chain is Aromatic-L-amino-acid decarboxylase, found in Bacillus atrophaeus.